The sequence spans 253 residues: Ubiquinone/menaquinone biosynthesis C-methyltransferase UbiE (253 aa).

Residues threonine 76, aspartate 97, 125–126 (NA), and serine 142 each bind S-adenosyl-L-methionine.

This sequence belongs to the class I-like SAM-binding methyltransferase superfamily. MenG/UbiE family.

The enzyme catalyses a 2-demethylmenaquinol + S-adenosyl-L-methionine = a menaquinol + S-adenosyl-L-homocysteine + H(+). It catalyses the reaction a 2-methoxy-6-(all-trans-polyprenyl)benzene-1,4-diol + S-adenosyl-L-methionine = a 5-methoxy-2-methyl-3-(all-trans-polyprenyl)benzene-1,4-diol + S-adenosyl-L-homocysteine + H(+). Its pathway is quinol/quinone metabolism; menaquinone biosynthesis; menaquinol from 1,4-dihydroxy-2-naphthoate: step 2/2. It functions in the pathway cofactor biosynthesis; ubiquinone biosynthesis. Functionally, methyltransferase required for the conversion of demethylmenaquinol (DMKH2) to menaquinol (MKH2) and the conversion of 2-polyprenyl-6-methoxy-1,4-benzoquinol (DDMQH2) to 2-polyprenyl-3-methyl-6-methoxy-1,4-benzoquinol (DMQH2). The sequence is that of Ubiquinone/menaquinone biosynthesis C-methyltransferase UbiE from Xanthomonas oryzae pv. oryzae (strain MAFF 311018).